A 320-amino-acid polypeptide reads, in one-letter code: Phosphate acyltransferase (320 aa).

This sequence belongs to the PlsX family. In terms of assembly, homodimer. Probably interacts with PlsY.

The protein resides in the cytoplasm. The catalysed reaction is a fatty acyl-[ACP] + phosphate = an acyl phosphate + holo-[ACP]. Its pathway is lipid metabolism; phospholipid metabolism. Catalyzes the reversible formation of acyl-phosphate (acyl-PO(4)) from acyl-[acyl-carrier-protein] (acyl-ACP). This enzyme utilizes acyl-ACP as fatty acyl donor, but not acyl-CoA. The polypeptide is Phosphate acyltransferase (Chlamydia pneumoniae (Chlamydophila pneumoniae)).